A 434-amino-acid chain; its full sequence is Enolase (434 aa).

Glutamine 163 contacts (2R)-2-phosphoglycerate. The Proton donor role is filled by glutamate 205. Residues aspartate 243, glutamate 291, and aspartate 318 each coordinate Mg(2+). (2R)-2-phosphoglycerate is bound by residues lysine 343, arginine 372, serine 373, and lysine 394. Lysine 343 (proton acceptor) is an active-site residue.

It belongs to the enolase family. It depends on Mg(2+) as a cofactor.

It localises to the cytoplasm. Its subcellular location is the secreted. It is found in the cell surface. It carries out the reaction (2R)-2-phosphoglycerate = phosphoenolpyruvate + H2O. It participates in carbohydrate degradation; glycolysis; pyruvate from D-glyceraldehyde 3-phosphate: step 4/5. Catalyzes the reversible conversion of 2-phosphoglycerate (2-PG) into phosphoenolpyruvate (PEP). It is essential for the degradation of carbohydrates via glycolysis. The sequence is that of Enolase from Fusobacterium nucleatum subsp. nucleatum (strain ATCC 25586 / DSM 15643 / BCRC 10681 / CIP 101130 / JCM 8532 / KCTC 2640 / LMG 13131 / VPI 4355).